The primary structure comprises 377 residues: Succinyl-diaminopimelate desuccinylase (377 aa).

His68 contributes to the Zn(2+) binding site. Residue Asp70 is part of the active site. Asp101 serves as a coordination point for Zn(2+). Catalysis depends on Glu135, which acts as the Proton acceptor. Positions 136, 164, and 350 each coordinate Zn(2+).

This sequence belongs to the peptidase M20A family. DapE subfamily. As to quaternary structure, homodimer. Zn(2+) is required as a cofactor. Co(2+) serves as cofactor.

The catalysed reaction is N-succinyl-(2S,6S)-2,6-diaminopimelate + H2O = (2S,6S)-2,6-diaminopimelate + succinate. The protein operates within amino-acid biosynthesis; L-lysine biosynthesis via DAP pathway; LL-2,6-diaminopimelate from (S)-tetrahydrodipicolinate (succinylase route): step 3/3. In terms of biological role, catalyzes the hydrolysis of N-succinyl-L,L-diaminopimelic acid (SDAP), forming succinate and LL-2,6-diaminopimelate (DAP), an intermediate involved in the bacterial biosynthesis of lysine and meso-diaminopimelic acid, an essential component of bacterial cell walls. The chain is Succinyl-diaminopimelate desuccinylase from Acinetobacter baumannii (strain AB0057).